A 235-amino-acid polypeptide reads, in one-letter code: Phosphoribosylaminoimidazole-succinocarboxamide synthase (235 aa).

The protein belongs to the SAICAR synthetase family.

The catalysed reaction is 5-amino-1-(5-phospho-D-ribosyl)imidazole-4-carboxylate + L-aspartate + ATP = (2S)-2-[5-amino-1-(5-phospho-beta-D-ribosyl)imidazole-4-carboxamido]succinate + ADP + phosphate + 2 H(+). The protein operates within purine metabolism; IMP biosynthesis via de novo pathway; 5-amino-1-(5-phospho-D-ribosyl)imidazole-4-carboxamide from 5-amino-1-(5-phospho-D-ribosyl)imidazole-4-carboxylate: step 1/2. The sequence is that of Phosphoribosylaminoimidazole-succinocarboxamide synthase from Streptococcus thermophilus (strain CNRZ 1066).